Consider the following 223-residue polypeptide: Large ribosomal subunit protein uL3 (223 aa).

Residues glycine 137–glutamine 157 form a disordered region. The residue at position 157 (glutamine 157) is an N5-methylglutamine.

Belongs to the universal ribosomal protein uL3 family. As to quaternary structure, part of the 50S ribosomal subunit. Forms a cluster with proteins L14 and L19. Post-translationally, methylated by PrmB.

Functionally, one of the primary rRNA binding proteins, it binds directly near the 3'-end of the 23S rRNA, where it nucleates assembly of the 50S subunit. This is Large ribosomal subunit protein uL3 from Burkholderia pseudomallei (strain 1106a).